Reading from the N-terminus, the 502-residue chain is Mannitol 2-dehydrogenase (502 aa).

Position 37–48 (37–48 (IVHVGVGGFHRA)) interacts with NAD(+).

The protein belongs to the mannitol dehydrogenase family. Monomer.

It catalyses the reaction D-mannitol + NAD(+) = D-fructose + NADH + H(+). In terms of biological role, catalyzes the NAD(H)-dependent interconversion of D-fructose and D-mannitol in the mannitol metabolic pathway. The polypeptide is Mannitol 2-dehydrogenase (Aspergillus terreus (strain NIH 2624 / FGSC A1156)).